The sequence spans 549 residues: Siroheme synthase (549 aa).

The precorrin-2 dehydrogenase /sirohydrochlorin ferrochelatase stretch occupies residues 1–203; that stretch reads MNTFPLFFKL…GNENEALAQL (203 aa). Residues 22 to 23 and 43 to 44 contribute to the NAD(+) site; these read DV and PS. Ser128 is modified (phosphoserine). The interval 247–549 is uroporphyrinogen-III C-methyltransferase; that stretch reads GEVYIVGAGP…DGDLEQLIIG (303 aa). Residue Pro256 participates in S-adenosyl-L-methionine binding. The active-site Proton acceptor is Asp279. Lys301 acts as the Proton donor in catalysis. Residues 332-334, Ile337, 362-363, Met414, and Ala443 contribute to the S-adenosyl-L-methionine site; these read GGD and TA.

The protein in the N-terminal section; belongs to the precorrin-2 dehydrogenase / sirohydrochlorin ferrochelatase family. This sequence in the C-terminal section; belongs to the precorrin methyltransferase family.

It carries out the reaction uroporphyrinogen III + 2 S-adenosyl-L-methionine = precorrin-2 + 2 S-adenosyl-L-homocysteine + H(+). The enzyme catalyses precorrin-2 + NAD(+) = sirohydrochlorin + NADH + 2 H(+). The catalysed reaction is siroheme + 2 H(+) = sirohydrochlorin + Fe(2+). Its pathway is cofactor biosynthesis; adenosylcobalamin biosynthesis; precorrin-2 from uroporphyrinogen III: step 1/1. The protein operates within cofactor biosynthesis; adenosylcobalamin biosynthesis; sirohydrochlorin from precorrin-2: step 1/1. It functions in the pathway porphyrin-containing compound metabolism; siroheme biosynthesis; precorrin-2 from uroporphyrinogen III: step 1/1. It participates in porphyrin-containing compound metabolism; siroheme biosynthesis; siroheme from sirohydrochlorin: step 1/1. Its pathway is porphyrin-containing compound metabolism; siroheme biosynthesis; sirohydrochlorin from precorrin-2: step 1/1. Functionally, multifunctional enzyme that catalyzes the SAM-dependent methylations of uroporphyrinogen III at position C-2 and C-7 to form precorrin-2 via precorrin-1. Then it catalyzes the NAD-dependent ring dehydrogenation of precorrin-2 to yield sirohydrochlorin. Finally, it catalyzes the ferrochelation of sirohydrochlorin to yield siroheme. This Psychrobacter arcticus (strain DSM 17307 / VKM B-2377 / 273-4) protein is Siroheme synthase.